A 187-amino-acid chain; its full sequence is Elongation factor P 1 (187 aa).

It belongs to the elongation factor P family.

It localises to the cytoplasm. It functions in the pathway protein biosynthesis; polypeptide chain elongation. Functionally, involved in peptide bond synthesis. Stimulates efficient translation and peptide-bond synthesis on native or reconstituted 70S ribosomes in vitro. Probably functions indirectly by altering the affinity of the ribosome for aminoacyl-tRNA, thus increasing their reactivity as acceptors for peptidyl transferase. The protein is Elongation factor P 1 of Geobacter sulfurreducens (strain ATCC 51573 / DSM 12127 / PCA).